Here is a 280-residue protein sequence, read N- to C-terminus: Dermonecrotic toxin LsSicTox-alphaIA1 (280 aa).

Residue histidine 12 is part of the active site. 2 residues coordinate Mg(2+): glutamate 32 and aspartate 34. Histidine 48 serves as the catalytic Nucleophile. 2 cysteine pairs are disulfide-bonded: cysteine 52–cysteine 58 and cysteine 54–cysteine 197. Aspartate 92 lines the Mg(2+) pocket.

The protein belongs to the arthropod phospholipase D family. Class II subfamily. It depends on Mg(2+) as a cofactor. Expressed by the venom gland.

The protein localises to the secreted. It catalyses the reaction an N-(acyl)-sphingosylphosphocholine = an N-(acyl)-sphingosyl-1,3-cyclic phosphate + choline. The catalysed reaction is an N-(acyl)-sphingosylphosphoethanolamine = an N-(acyl)-sphingosyl-1,3-cyclic phosphate + ethanolamine. It carries out the reaction a 1-acyl-sn-glycero-3-phosphocholine = a 1-acyl-sn-glycero-2,3-cyclic phosphate + choline. The enzyme catalyses a 1-acyl-sn-glycero-3-phosphoethanolamine = a 1-acyl-sn-glycero-2,3-cyclic phosphate + ethanolamine. Dermonecrotic toxins cleave the phosphodiester linkage between the phosphate and headgroup of certain phospholipids (sphingolipid and lysolipid substrates), forming an alcohol (often choline) and a cyclic phosphate. This toxin acts on sphingomyelin (SM). It may also act on ceramide phosphoethanolamine (CPE), lysophosphatidylcholine (LPC) and lysophosphatidylethanolamine (LPE), but not on lysophosphatidylserine (LPS), and lysophosphatidylglycerol (LPG). It acts by transphosphatidylation, releasing exclusively cyclic phosphate products as second products. Induces dermonecrosis, hemolysis, increased vascular permeability, edema, inflammatory response, and platelet aggregation. This is Dermonecrotic toxin LsSicTox-alphaIA1 from Loxosceles similis (Brazilian brown spider).